The primary structure comprises 588 residues: Beta-(1--&gt;2)glucan export ATP-binding/permease protein NdvA (588 aa).

One can recognise an ABC transmembrane type-1 domain in the interval 21 to 301; that stretch reads VAVVVIANVI…MRQFVTQIFE (281 aa). 6 consecutive transmembrane segments (helical) span residues 22–42, 57–77, 136–156, 158–178, 248–268, and 272–292; these read AVVV…PVLF, PILI…VAVA, THLA…AMDL, LSFV…WVMG, TAST…VKNG, and VGDV…LDQM. The region spanning 335–569 is the ABC transporter domain; it reads VEFRNINFGF…GGRFTSLLRT (235 aa). 368–375 provides a ligand contact to ATP; that stretch reads GPTGAGKT.

It belongs to the ABC transporter superfamily. Beta-(1--&gt;2)glucan exporter (TC 3.A.1.108.1) family. Homodimer.

The protein resides in the cell inner membrane. It carries out the reaction [(1-&gt;2)-beta-D-glucosyl](n)(in) + ATP + H2O = [(1-&gt;2)-beta-D-glucosyl](n)(out) + ADP + phosphate + H(+). Its function is as follows. Involved in beta-(1--&gt;2)glucan export which is required for crown gall tumor formation. Transmembrane domains (TMD) form a pore in the inner membrane and the ATP-binding domain (NBD) is responsible for energy generation. The polypeptide is Beta-(1--&gt;2)glucan export ATP-binding/permease protein NdvA (Rhizobium radiobacter (Agrobacterium tumefaciens)).